A 333-amino-acid polypeptide reads, in one-letter code: 2-oxoglutarate-dependent dioxygenase 21, chloroplastic (333 aa).

The transit peptide at Met1 to Arg43 directs the protein to the chloroplast. Residues Gly180–Leu281 form the Fe2OG dioxygenase domain. Positions 205, 207, and 262 each coordinate Fe cation. 2-oxoglutarate is bound at residue Arg272.

Belongs to the iron/ascorbate-dependent oxidoreductase family. Fe(2+) serves as cofactor. Requires L-ascorbate as cofactor. Expressed in roots.

The protein resides in the plastid. It is found in the chloroplast. It catalyses the reaction melatonin + 2-oxoglutarate + O2 = 2-hydroxymelatonin + succinate + CO2. Involved in melatonin degradation. Catalyzes the hydroxylation of melatonin to produce 2-hydroxymelatonin. The sequence is that of 2-oxoglutarate-dependent dioxygenase 21, chloroplastic from Oryza sativa subsp. japonica (Rice).